The sequence spans 586 residues: Proline--tRNA ligase (586 aa).

It belongs to the class-II aminoacyl-tRNA synthetase family. ProS type 1 subfamily. Homodimer.

The protein resides in the cytoplasm. The catalysed reaction is tRNA(Pro) + L-proline + ATP = L-prolyl-tRNA(Pro) + AMP + diphosphate. Its function is as follows. Catalyzes the attachment of proline to tRNA(Pro) in a two-step reaction: proline is first activated by ATP to form Pro-AMP and then transferred to the acceptor end of tRNA(Pro). As ProRS can inadvertently accommodate and process non-cognate amino acids such as alanine and cysteine, to avoid such errors it has two additional distinct editing activities against alanine. One activity is designated as 'pretransfer' editing and involves the tRNA(Pro)-independent hydrolysis of activated Ala-AMP. The other activity is designated 'posttransfer' editing and involves deacylation of mischarged Ala-tRNA(Pro). The misacylated Cys-tRNA(Pro) is not edited by ProRS. This is Proline--tRNA ligase from Kineococcus radiotolerans (strain ATCC BAA-149 / DSM 14245 / SRS30216).